Reading from the N-terminus, the 721-residue chain is Methionine--tRNA ligase (721 aa).

The short motif at 27 to 37 (PYANGQIHIGH) is the 'HIGH' region element. 4 residues coordinate Zn(2+): cysteine 158, cysteine 161, cysteine 171, and cysteine 174. Positions 348–352 (KMSKS) match the 'KMSKS' region motif. Residue lysine 351 participates in ATP binding. One can recognise a tRNA-binding domain in the interval 615 to 721 (DFAKIDLRIA…SGAKPGMRVK (107 aa)).

The protein belongs to the class-I aminoacyl-tRNA synthetase family. MetG type 1 subfamily. Homodimer. It depends on Zn(2+) as a cofactor.

It localises to the cytoplasm. It catalyses the reaction tRNA(Met) + L-methionine + ATP = L-methionyl-tRNA(Met) + AMP + diphosphate. Its function is as follows. Is required not only for elongation of protein synthesis but also for the initiation of all mRNA translation through initiator tRNA(fMet) aminoacylation. The chain is Methionine--tRNA ligase from Burkholderia vietnamiensis (strain G4 / LMG 22486) (Burkholderia cepacia (strain R1808)).